Consider the following 618-residue polypeptide: Transcriptional regulator CPUR_05421 (618 aa).

Residues 14–41 (CSHLVGREIGCSRDLAGCRRCTSEGRAC) constitute a DNA-binding region (zn(2)-C6 fungal-type). The disordered stretch occupies residues 52–87 (TRRRNRANQDVTRSALYSSNTTPQTISDQATGRPCE). The span at 59–81 (NQDVTRSALYSSNTTPQTISDQA) shows a compositional bias: polar residues.

The protein resides in the nucleus. Its function is as follows. Transcriptional regulator; part of the ergochrome gene cluster responsible for the typical purple-black color of the ergot sclerotia. The ergochrome gene cluster produces several ergot pigments including the yellow ergochrome secalonic acid and its derivatives, as well as the red anthraquinones endocrocin and clavorubin. The chain is Transcriptional regulator CPUR_05421 from Claviceps purpurea (strain 20.1) (Ergot fungus).